The chain runs to 366 residues: Ribosomal RNA large subunit methyltransferase M (366 aa).

S-adenosyl-L-methionine contacts are provided by residues S188, 221 to 224 (CPGG), D240, D260, and D277. The Proton acceptor role is filled by K306.

The protein belongs to the class I-like SAM-binding methyltransferase superfamily. RNA methyltransferase RlmE family. RlmM subfamily. In terms of assembly, monomer.

It localises to the cytoplasm. The enzyme catalyses cytidine(2498) in 23S rRNA + S-adenosyl-L-methionine = 2'-O-methylcytidine(2498) in 23S rRNA + S-adenosyl-L-homocysteine + H(+). Functionally, catalyzes the 2'-O-methylation at nucleotide C2498 in 23S rRNA. The polypeptide is Ribosomal RNA large subunit methyltransferase M (Shigella flexneri serotype 5b (strain 8401)).